Consider the following 533-residue polypeptide: Thromboxane-A synthase (533 aa).

The Cytoplasmic segment spans residues 1–10 (MEVLGLLKFE). A helical transmembrane segment spans residues 11 to 31 (VSGTIVTVTLLVALLALLKWY). Topologically, residues 32–75 (SMSAFSRLEKLGIRHPKPSPFVGNLMFFRQGFWESQLELRERYG) are lumenal. Residues 76-96 (PLCGYYLGRRMHVVISEPDMI) form a helical membrane-spanning segment. At 97–223 (KQVLVENFSN…RRASTFCIPR (127 aa)) the chain is on the cytoplasmic side. Residues 224–244 (PLLVLILSFPSIMVPLARILP) form a helical membrane-spanning segment. The Lumenal segment spans residues 245-335 (NKNRDELNGF…FTVDEIVGQA (91 aa)). The helical transmembrane segment at 336–356 (FLFLIAGHEVITNTLSFITYL) threads the bilayer. The Cytoplasmic segment spans residues 357–533 (LATHPDCQER…NGVYIKIVSR (177 aa)). Cysteine 479 lines the heme pocket.

It belongs to the cytochrome P450 family. In terms of assembly, monomer. It depends on heme as a cofactor. Expressed primarily in lung, kidney, and spleen.

The protein localises to the endoplasmic reticulum membrane. The enzyme catalyses prostaglandin H2 = thromboxane A2. It carries out the reaction prostaglandin H2 = (12S)-hydroxy-(5Z,8E,10E)-heptadecatrienoate + malonaldehyde. The catalysed reaction is a hydroperoxyeicosatetraenoate = an oxoeicosatetraenoate + H2O. It catalyses the reaction (15S)-hydroperoxy-(5Z,8Z,11Z,13E)-eicosatetraenoate = 15-oxo-(5Z,8Z,11Z,13E)-eicosatetraenoate + H2O. The enzyme catalyses (15S)-hydroperoxy-(5Z,8Z,11Z,13E)-eicosatetraenoate + AH2 = (15S)-hydroxy-(5Z,8Z,11Z,13E)-eicosatetraenoate + A + H2O. In terms of biological role, catalyzes the conversion of prostaglandin H2 (PGH2) to thromboxane A2 (TXA2), a potent inducer of blood vessel constriction and platelet aggregation. Also cleaves PGH2 to 12-hydroxy-heptadecatrienoicacid (12-HHT) and malondialdehyde, which is known to act as a mediator of DNA damage. 12-HHT and malondialdehyde are formed stoichiometrically in the same amounts as TXA2. Additionally, displays dehydratase activity, toward (15S)-hydroperoxy-(5Z,8Z,11Z,13E)-eicosatetraenoate (15(S)-HPETE) producing 15-KETE and 15-HETE. This chain is Thromboxane-A synthase (Tbxas1), found in Mus musculus (Mouse).